Reading from the N-terminus, the 185-residue chain is Virulence membrane protein PagC (185 aa).

An N-terminal signal peptide occupies residues 1–23; sequence MKNIILSTLVITTSVLVVNVAQA.

This sequence belongs to the outer membrane OOP (TC 1.B.6) superfamily. Ail family.

It localises to the cell outer membrane. Its function is as follows. Essential for full virulence and survival within macrophages. In Salmonella typhimurium (strain LT2 / SGSC1412 / ATCC 700720), this protein is Virulence membrane protein PagC (pagC).